A 485-amino-acid chain; its full sequence is Glutamyl-tRNA(Gln) amidotransferase subunit A (485 aa).

Residues lysine 79 and serine 154 each act as charge relay system in the active site. Serine 178 acts as the Acyl-ester intermediate in catalysis.

Belongs to the amidase family. GatA subfamily. Heterotrimer of A, B and C subunits.

The catalysed reaction is L-glutamyl-tRNA(Gln) + L-glutamine + ATP + H2O = L-glutaminyl-tRNA(Gln) + L-glutamate + ADP + phosphate + H(+). Allows the formation of correctly charged Gln-tRNA(Gln) through the transamidation of misacylated Glu-tRNA(Gln) in organisms which lack glutaminyl-tRNA synthetase. The reaction takes place in the presence of glutamine and ATP through an activated gamma-phospho-Glu-tRNA(Gln). This is Glutamyl-tRNA(Gln) amidotransferase subunit A from Clostridium botulinum (strain Alaska E43 / Type E3).